The primary structure comprises 581 residues: Polypeptide N-acetylgalactosaminyltransferase 12 (581 aa).

The Cytoplasmic portion of the chain corresponds to 1–19; it reads MWGRTARRRCPRELRRGRE. A helical; Signal-anchor for type II membrane protein membrane pass occupies residues 20–37; that stretch reads ALLVLLALLALAGLGSVL. Residues 38 to 581 lie on the Lumenal side of the membrane; the sequence is RAQRGAGAGA…QKWFFKERML (544 aa). A disordered region spans residues 43–67; that stretch reads AGAGAAEPGPPRTPRPGRREPVMPR. 5 disulfide bridges follow: cysteine 125–cysteine 358, cysteine 349–cysteine 422, cysteine 458–cysteine 479, cysteine 506–cysteine 521, and cysteine 547–cysteine 566. Positions 135-244 are catalytic subdomain A; it reads LPRTSVIIAF…EGWLEPLLQR (110 aa). The substrate site is built by aspartate 176 and arginine 205. Mn(2+) contacts are provided by aspartate 228 and histidine 230. The segment at 304–366 is catalytic subdomain B; the sequence is VIRSPTMAGG…PCSHVGHVFP (63 aa). Tryptophan 335 contributes to the substrate binding site. Histidine 363 is a Mn(2+) binding site. Tyrosine 371 contributes to the substrate binding site. The Ricin B-type lectin domain maps to 445–577; that stretch reads FFGMLQNKGL…NSDHQKWFFK (133 aa).

It belongs to the glycosyltransferase 2 family. GalNAc-T subfamily. Requires Mn(2+) as cofactor. In terms of tissue distribution, widely expressed at different levels of expression. Highly expressed in digestive organs such as small intestine, stomach, pancreas and colon. Expressed at intermediate level in testis, thyroid gland and spleen. Weakly expressed in whole brain, cerebral cortex, cerebellum, fetal brain, bone marrow, thymus, leukocytes, heart, skeletal muscle, liver, lung, esophagus, kidney, adrenal gland, mammary gland, uterus, placenta, ovary and prostate.

The protein localises to the golgi apparatus membrane. It catalyses the reaction L-seryl-[protein] + UDP-N-acetyl-alpha-D-galactosamine = a 3-O-[N-acetyl-alpha-D-galactosaminyl]-L-seryl-[protein] + UDP + H(+). The enzyme catalyses L-threonyl-[protein] + UDP-N-acetyl-alpha-D-galactosamine = a 3-O-[N-acetyl-alpha-D-galactosaminyl]-L-threonyl-[protein] + UDP + H(+). Its pathway is protein modification; protein glycosylation. Catalyzes the initial reaction in O-linked oligosaccharide biosynthesis, the transfer of an N-acetyl-D-galactosamine residue to a serine or threonine residue on the protein receptor. Has activity toward non-glycosylated peptides such as Muc5AC, Muc1a and EA2, and no detectable activity with Muc2 and Muc7. Displays enzymatic activity toward the Gal-NAc-Muc5AC glycopeptide, but no detectable activity to mono-GalNAc-glycosylated Muc1a, Muc2, Muc7 and EA2. May play an important role in the initial step of mucin-type oligosaccharide biosynthesis in digestive organs. The protein is Polypeptide N-acetylgalactosaminyltransferase 12 (GALNT12) of Homo sapiens (Human).